We begin with the raw amino-acid sequence, 189 residues long: Protein GrpE (189 aa).

Residues 1-24 (MADEQTVDTQNPEANQAPEASGDD) form a disordered region.

Belongs to the GrpE family. Homodimer.

It localises to the cytoplasm. Participates actively in the response to hyperosmotic and heat shock by preventing the aggregation of stress-denatured proteins, in association with DnaK and GrpE. It is the nucleotide exchange factor for DnaK and may function as a thermosensor. Unfolded proteins bind initially to DnaJ; upon interaction with the DnaJ-bound protein, DnaK hydrolyzes its bound ATP, resulting in the formation of a stable complex. GrpE releases ADP from DnaK; ATP binding to DnaK triggers the release of the substrate protein, thus completing the reaction cycle. Several rounds of ATP-dependent interactions between DnaJ, DnaK and GrpE are required for fully efficient folding. This Pseudomonas fluorescens (strain Pf0-1) protein is Protein GrpE.